Consider the following 294-residue polypeptide: Probable endonuclease 4 (294 aa).

Zn(2+) contacts are provided by His78, His118, Glu155, Asp189, His192, His226, Asp239, His241, and Glu271.

Belongs to the AP endonuclease 2 family. It depends on Zn(2+) as a cofactor.

It catalyses the reaction Endonucleolytic cleavage to 5'-phosphooligonucleotide end-products.. Functionally, endonuclease IV plays a role in DNA repair. It cleaves phosphodiester bonds at apurinic or apyrimidinic (AP) sites, generating a 3'-hydroxyl group and a 5'-terminal sugar phosphate. This chain is Probable endonuclease 4, found in Oleidesulfovibrio alaskensis (strain ATCC BAA-1058 / DSM 17464 / G20) (Desulfovibrio alaskensis).